A 365-amino-acid polypeptide reads, in one-letter code: Protein RecA (365 aa).

73–80 (GPESSGKT) contacts ATP.

Belongs to the RecA family.

The protein resides in the cytoplasm. Its function is as follows. Can catalyze the hydrolysis of ATP in the presence of single-stranded DNA, the ATP-dependent uptake of single-stranded DNA by duplex DNA, and the ATP-dependent hybridization of homologous single-stranded DNAs. It interacts with LexA causing its activation and leading to its autocatalytic cleavage. The chain is Protein RecA from Prochlorococcus marinus (strain AS9601).